Reading from the N-terminus, the 306-residue chain is Protein FAM228A (306 aa).

The segment at 237–277 (HASKLSQQNKGAEKKGLALGTRAQRPRSWAAADSPQGTPLV) is disordered. A Phosphoserine modification is found at Ser270.

Belongs to the FAM228 family.

This chain is Protein FAM228A (Fam228a), found in Rattus norvegicus (Rat).